A 179-amino-acid chain; its full sequence is Lebocin-1/2 (179 aa).

An N-terminal signal peptide occupies residues 1-16; the sequence is MYKFLVFSSVLVLFFA. The propeptide occupies 17–120; it reads QASCQRFIQP…QPIESHRNTR (104 aa). A disordered region spans residues 93 to 116; it reads NNEASIEHSHHTVDTGLDQPIESH. Thr-135 is a glycosylation site (O-linked (GalNAc...) threonine). Positions 153–179 are excised as a propeptide; the sequence is RRHASDDQEELRQYNEHFLIPRDIFQE.

Belongs to the lebocin family. Post-translationally, O-glycosylation is important for the antibacterial activity of lebocin, O-linked glycan structure is a disaccharide (Gal-GalNAc) in case of lebocin 1 and a monosaccharide (GalNAc) in case of lebocin 2. In terms of tissue distribution, hemolymph. Produced in fat body.

The protein localises to the secreted. Functionally, antibacterial peptide. This is Lebocin-1/2 from Bombyx mori (Silk moth).